We begin with the raw amino-acid sequence, 253 residues long: Large ribosomal subunit protein mL57 (253 aa).

A mitochondrion-targeting transit peptide spans 1–28 (MENSMMFISRSLRRPVTALNCNLQSVRT).

It belongs to the ribonuclease III family. Mitochondrion-specific ribosomal protein mL57 subfamily. In terms of assembly, component of the mitochondrial large ribosomal subunit (mt-LSU). Mature yeast 74S mitochondrial ribosomes consist of a small (37S) and a large (54S) subunit. The 37S small subunit contains a 15S ribosomal RNA (15S mt-rRNA) and 34 different proteins. The 54S large subunit contains a 21S rRNA (21S mt-rRNA) and 46 different proteins. mL57 forms a heterodimer with mL44 and stabilizes rRNA expansion segments 1/2 at a membrane-facing protuberance close to the point of attachment of the ribosome to the translocon in the membrane.

It is found in the mitochondrion. In terms of biological role, component of the mitochondrial ribosome (mitoribosome), a dedicated translation machinery responsible for the synthesis of mitochondrial genome-encoded proteins, including at least some of the essential transmembrane subunits of the mitochondrial respiratory chain. The mitoribosomes are attached to the mitochondrial inner membrane and translation products are cotranslationally integrated into the membrane. This is Large ribosomal subunit protein mL57 (MRPL15) from Saccharomyces cerevisiae (strain ATCC 204508 / S288c) (Baker's yeast).